We begin with the raw amino-acid sequence, 371 residues long: tRNA-specific 2-thiouridylase MnmA (371 aa).

ATP-binding positions include 7–14 (AMSGGVDS) and L33. The active-site Nucleophile is the C101. C101 and C213 are joined by a disulfide. G125 is an ATP binding site. The segment at 163 to 165 (KDQ) is interaction with tRNA. The active-site Cysteine persulfide intermediate is the C213.

The protein belongs to the MnmA/TRMU family.

The protein localises to the cytoplasm. The catalysed reaction is S-sulfanyl-L-cysteinyl-[protein] + uridine(34) in tRNA + AH2 + ATP = 2-thiouridine(34) in tRNA + L-cysteinyl-[protein] + A + AMP + diphosphate + H(+). In terms of biological role, catalyzes the 2-thiolation of uridine at the wobble position (U34) of tRNA, leading to the formation of s(2)U34. This is tRNA-specific 2-thiouridylase MnmA from Roseiflexus castenholzii (strain DSM 13941 / HLO8).